Reading from the N-terminus, the 619-residue chain is MWNDEDNNPYGSFERRDSFASSTNPASPTARDYSIDARFPTPQDVRYDAPLTPSDAGDDEVPGPTYPREASDAATDDETDDQAHGELVPRRKPGGYDSRIEQMLYENPELPILITEAGKSQESGGRFIVYTIKTGDLTVRRRYSEFASLRDALTRLHPTLVIPPIPEKHTMADYAANPTNAKQDQQIIDLRKRMLAVFLNRCRRMEQVRTDGVWWRFLDPNSSWTEVLHSHPVSSIPKQIMKAPPLDPANPTAGHSFLPVPSSSAKLKTLPTQALDSAAAASLARFPPDANSLSEQDLDAYFIAFETSIKDLESLLTGPMEKVNRRTLNHLSSLASDLSELGARYNAFALSETAPTVSAAIERVGQAADSSYIATEELSTSLSASFAEPMRESAQFAGVVRNVLRYRILKRVQQEMTTDELNKKKALLESLERSEAEARRIDQYLSSSQQIQPPRREPPAQHRRDGSGEDTASIDSDFPPTHSDFSQAPSAKIGAPERTGGSPSHKKAASTSITNKIFGPIRHAVQGVVDVDPERTRRDTIGKTRESIVQLEQAQIASAKDVKDASASVLKDLKRFQREKEDDLKRYMLAYAKSQIEWAKKNQETWEEAKAEVNKINES.

Positions 1–95 (MWNDEDNNPY…ELVPRRKPGG (95 aa)) are disordered. The PX domain maps to 108–224 (PELPILITEA…WRFLDPNSSW (117 aa)). 4 residues coordinate a 1,2-diacyl-sn-glycero-3-phospho-(1D-myo-inositol-3-phosphate): arginine 142, serine 144, lysine 168, and arginine 191. Residues 444 to 510 (YLSSSQQIQP…GSPSHKKAAS (67 aa)) form a disordered region. A compositionally biased stretch (basic and acidic residues) spans 454 to 467 (PRREPPAQHRRDGS).

It belongs to the sorting nexin family.

Its subcellular location is the endosome membrane. It is found in the endomembrane system. Functionally, may be required for cytoplasm to vacuole transport (Cvt) and pexophagy. This Neurospora crassa (strain ATCC 24698 / 74-OR23-1A / CBS 708.71 / DSM 1257 / FGSC 987) protein is Sorting nexin-41 (vsp-6).